We begin with the raw amino-acid sequence, 148 residues long: Large ribosomal subunit protein bL9 (148 aa).

Belongs to the bacterial ribosomal protein bL9 family.

In terms of biological role, binds to the 23S rRNA. The protein is Large ribosomal subunit protein bL9 of Sulfurimonas denitrificans (strain ATCC 33889 / DSM 1251) (Thiomicrospira denitrificans (strain ATCC 33889 / DSM 1251)).